We begin with the raw amino-acid sequence, 209 residues long: Adenylate kinase (209 aa).

Residue 10 to 15 (GAGKGT) participates in ATP binding. An NMP region spans residues 30–59 (STGDLFRAAIKEQTDLGKKVKAVIDSGALV). AMP contacts are provided by residues threonine 31, arginine 36, 57-59 (ALV), 85-88 (GFPR), and glutamine 92. The tract at residues 121–158 (GRRVCSSCGQSFHIEFVKPKKEGICDSCSGDLMIRPDD) is LID. Arginine 122 contacts ATP. 2 residues coordinate Zn(2+): cysteine 125 and cysteine 128. 131-132 (SF) provides a ligand contact to ATP. Positions 145 and 148 each coordinate Zn(2+). The AMP site is built by arginine 155 and arginine 166. An ATP-binding site is contributed by proline 194.

The protein belongs to the adenylate kinase family. Monomer.

It is found in the cytoplasm. It catalyses the reaction AMP + ATP = 2 ADP. It participates in purine metabolism; AMP biosynthesis via salvage pathway; AMP from ADP: step 1/1. Its function is as follows. Catalyzes the reversible transfer of the terminal phosphate group between ATP and AMP. Plays an important role in cellular energy homeostasis and in adenine nucleotide metabolism. The chain is Adenylate kinase from Treponema denticola (strain ATCC 35405 / DSM 14222 / CIP 103919 / JCM 8153 / KCTC 15104).